Here is a 1024-residue protein sequence, read N- to C-terminus: Beta-galactosidase (1024 aa).

Residues N103 and D202 each coordinate substrate. A Na(+)-binding site is contributed by D202. The Mg(2+) site is built by E417, H419, and E462. Substrate is bound by residues E462 and 538–541 (EYAH). The Proton donor role is filled by E462. E538 functions as the Nucleophile in the catalytic mechanism. N598 lines the Mg(2+) pocket. Na(+) contacts are provided by F602 and N605. Residues N605 and W1000 each contribute to the substrate site.

Belongs to the glycosyl hydrolase 2 family. As to quaternary structure, homotetramer. Mg(2+) serves as cofactor. The cofactor is Na(+).

The enzyme catalyses Hydrolysis of terminal non-reducing beta-D-galactose residues in beta-D-galactosides.. The sequence is that of Beta-galactosidase from Shigella sonnei (strain Ss046).